We begin with the raw amino-acid sequence, 161 residues long: Dermonecrotic toxin LarSicTox-alphaI-1 (161 aa).

This sequence belongs to the arthropod phospholipase D family. Class II subfamily. The cofactor is Mg(2+). In terms of processing, contains 2 disulfide bonds. Expressed by the venom gland.

The protein resides in the secreted. It carries out the reaction an N-(acyl)-sphingosylphosphocholine = an N-(acyl)-sphingosyl-1,3-cyclic phosphate + choline. The enzyme catalyses an N-(acyl)-sphingosylphosphoethanolamine = an N-(acyl)-sphingosyl-1,3-cyclic phosphate + ethanolamine. The catalysed reaction is a 1-acyl-sn-glycero-3-phosphocholine = a 1-acyl-sn-glycero-2,3-cyclic phosphate + choline. It catalyses the reaction a 1-acyl-sn-glycero-3-phosphoethanolamine = a 1-acyl-sn-glycero-2,3-cyclic phosphate + ethanolamine. Its function is as follows. Dermonecrotic toxins cleave the phosphodiester linkage between the phosphate and headgroup of certain phospholipids (sphingolipid and lysolipid substrates), forming an alcohol (often choline) and a cyclic phosphate. This toxin acts on sphingomyelin (SM). It may also act on ceramide phosphoethanolamine (CPE), lysophosphatidylcholine (LPC) and lysophosphatidylethanolamine (LPE), but not on lysophosphatidylserine (LPS), and lysophosphatidylglycerol (LPG). It acts by transphosphatidylation, releasing exclusively cyclic phosphate products as second products. Induces dermonecrosis, hemolysis, increased vascular permeability, edema, inflammatory response, and platelet aggregation. The protein is Dermonecrotic toxin LarSicTox-alphaI-1 of Loxosceles arizonica (Arizona brown spider).